Here is an 84-residue protein sequence, read N- to C-terminus: Small ribosomal subunit protein bS18 (84 aa).

Belongs to the bacterial ribosomal protein bS18 family. In terms of assembly, part of the 30S ribosomal subunit. Forms a tight heterodimer with protein bS6.

In terms of biological role, binds as a heterodimer with protein bS6 to the central domain of the 16S rRNA, where it helps stabilize the platform of the 30S subunit. This chain is Small ribosomal subunit protein bS18, found in Methylorubrum extorquens (strain CM4 / NCIMB 13688) (Methylobacterium extorquens).